The following is a 350-amino-acid chain: Dauer larva development regulatory growth factor daf-7 (350 aa).

The N-terminal stretch at 1 to 21 (MFMASSLPVFIFLLSLPHGLT) is a signal peptide. Residues 22–234 (FNCTNSGVCI…TRPKGSRKRR (213 aa)) constitute a propeptide that is removed on maturation. N23 carries N-linked (GlcNAc...) asparagine glycosylation. Cystine bridges form between C241/C251, C250/C315, C278/C347, and C282/C349.

The protein belongs to the TGF-beta family. As to expression, expressed in the chemosensory neurons, including in the ASJ neurons in males. Expressed in the ASI neurons.

Its subcellular location is the secreted. Its function is as follows. Under harsh environmental conditions, larvae enter a developmentally arrested state known as dauer; TGF-beta-like daf-7 acts to inhibit dauer larva formation and promote growth. May be a ligand to cell surface receptor daf-4. May act as a negative regulator of dauer larva development by transducing chemosensory information from ASI neurons. Involved in sensitivity to CO2 levels. Involved in mate searching behavior of males, acting in concert with the neuropeptide pdf-1. In AWC neurons, acts to promote expression of srsx-3, a member of the GPCR family. This is Dauer larva development regulatory growth factor daf-7 from Caenorhabditis elegans.